The chain runs to 251 residues: Chloride intracellular channel protein 5 (251 aa).

Residues 1 to 98 are required for insertion into the membrane; the sequence is MTDSATANGD…EEFLEETLTP (98 aa). Positions 32–35 match the G-site motif; sequence CPFS. A helical membrane pass occupies residues 34–54; the sequence is FSQRLFMILWLKGVVFNVTTV. A GST C-terminal domain is found at 101-241; that stretch reads YPKLAARHRE…AADSEIELAY (141 aa).

It belongs to the chloride channel CLIC family. Component of a multimeric complex consisting of several cytoskeletal proteins, including actin, ezrin, alpha-actinin, gelsolin, and IQGAP1. Interacts with AKAP9. Interacts with TPRN. TPRN, CLIC5 and PTPQR form concentric rings at the base of stereocilia and may form a complex. Interacts with EZR, MYO6 and RDX; the proteins may work together as a complex to stabilize linkages between the plasma membrane and subjacent actin cytoskeleton at the stereocilium base. Detected in cochlea, in cochlear and vestibular hair cell bundles in the organ of Corti (at protein level). Expressed neonatal and adult cardiomyocytes (at protein level).

The protein localises to the golgi apparatus. It is found in the cytoplasm. Its subcellular location is the cytoskeleton. It localises to the microtubule organizing center. The protein resides in the centrosome. The protein localises to the cell cortex. It is found in the membrane. Its subcellular location is the apical cell membrane. It localises to the mitochondrion. The protein resides in the cell projection. The protein localises to the stereocilium. It carries out the reaction Na(+)(in) = Na(+)(out). The enzyme catalyses K(+)(in) = K(+)(out). It catalyses the reaction chloride(in) = chloride(out). With respect to regulation, inhibited by F-actin. Functionally, in the soluble state, catalyzes glutaredoxin-like thiol disulfide exchange reactions with reduced glutathione as electron donor. Can insert into membranes and form non-selective ion channels almost equally permeable to Na(+), K(+) and Cl(-). Required for normal hearing. It is necessary for the formation of stereocilia in the inner ear and normal development of the organ of Corti. May play a role in the regulation of transepithelial ion absorption and secretion. Is required for the development and/or maintenance of the proper glomerular endothelial cell and podocyte architecture. Plays a role in formation of the lens suture in the eye, which is important for normal optical properties of the lens. The protein is Chloride intracellular channel protein 5 (Clic5) of Rattus norvegicus (Rat).